A 75-amino-acid polypeptide reads, in one-letter code: U6-lycotoxin-Ls1d (75 aa).

The N-terminal stretch at 1–21 is a signal peptide; it reads MKLLLFTALVLVVISLIEVEA. Positions 22-25 are excised as a propeptide; sequence ENER.

This sequence belongs to the neurotoxin 19 (CSTX) family. 06 (U6-Lctx) subfamily. In terms of processing, contains 4 disulfide bonds. As to expression, expressed by the venom gland.

It localises to the secreted. This Lycosa singoriensis (Wolf spider) protein is U6-lycotoxin-Ls1d.